The following is a 514-amino-acid chain: uncharacterized protein (514 aa).

3 disordered regions span residues 1-68 (MSSP…SESE), 109-244 (VPPP…RQAS), and 272-484 (RPAV…AQGC). Positions 368-384 (KPQKPKHSSPGKKPAGR) are enriched in basic residues. Residues 385–405 (KTRESQAAAREDNDPNRDEVP) show a composition bias toward basic and acidic residues.

This is an uncharacterized protein from Homo sapiens (Human).